We begin with the raw amino-acid sequence, 200 residues long: uncharacterized protein (200 aa).

Its function is as follows. Involved in osmoadaptation. This is an uncharacterized protein from Emericella nidulans (strain FGSC A4 / ATCC 38163 / CBS 112.46 / NRRL 194 / M139) (Aspergillus nidulans).